The sequence spans 552 residues: Glutamate--tRNA ligase (552 aa).

The short motif at 41–51 (PSPTGFQHIGG) is the 'HIGH' region element. The 'KMSKS' region signature appears at 293–297 (KLSKR). Lysine 296 lines the ATP pocket.

Belongs to the class-I aminoacyl-tRNA synthetase family. Glutamate--tRNA ligase type 1 subfamily. As to quaternary structure, monomer.

Its subcellular location is the cytoplasm. It carries out the reaction tRNA(Glu) + L-glutamate + ATP = L-glutamyl-tRNA(Glu) + AMP + diphosphate. Catalyzes the attachment of glutamate to tRNA(Glu) in a two-step reaction: glutamate is first activated by ATP to form Glu-AMP and then transferred to the acceptor end of tRNA(Glu). This Clostridium perfringens (strain SM101 / Type A) protein is Glutamate--tRNA ligase.